Here is a 238-residue protein sequence, read N- to C-terminus: 4-hydroxy-tetrahydrodipicolinate reductase (238 aa).

12–17 contributes to the NAD(+) binding site; that stretch reads GASGRM. Arg-40 is an NADP(+) binding site. Residues 93 to 95 and 117 to 120 each bind NAD(+); these read GTT and ASNF. Catalysis depends on His-149, which acts as the Proton donor/acceptor. Residue His-150 coordinates (S)-2,3,4,5-tetrahydrodipicolinate. The Proton donor role is filled by Lys-153. (S)-2,3,4,5-tetrahydrodipicolinate is bound at residue 159 to 160; it reads GT.

Belongs to the DapB family.

It is found in the cytoplasm. The catalysed reaction is (S)-2,3,4,5-tetrahydrodipicolinate + NAD(+) + H2O = (2S,4S)-4-hydroxy-2,3,4,5-tetrahydrodipicolinate + NADH + H(+). It carries out the reaction (S)-2,3,4,5-tetrahydrodipicolinate + NADP(+) + H2O = (2S,4S)-4-hydroxy-2,3,4,5-tetrahydrodipicolinate + NADPH + H(+). It functions in the pathway amino-acid biosynthesis; L-lysine biosynthesis via DAP pathway; (S)-tetrahydrodipicolinate from L-aspartate: step 4/4. In terms of biological role, catalyzes the conversion of 4-hydroxy-tetrahydrodipicolinate (HTPA) to tetrahydrodipicolinate. This chain is 4-hydroxy-tetrahydrodipicolinate reductase, found in Xanthomonas campestris pv. campestris (strain 8004).